The following is a 556-amino-acid chain: Formate--tetrahydrofolate ligase (556 aa).

ATP is bound at residue 65-72 (TPAGEGKS).

Belongs to the formate--tetrahydrofolate ligase family.

It carries out the reaction (6S)-5,6,7,8-tetrahydrofolate + formate + ATP = (6R)-10-formyltetrahydrofolate + ADP + phosphate. Its pathway is one-carbon metabolism; tetrahydrofolate interconversion. This is Formate--tetrahydrofolate ligase from Streptococcus pneumoniae serotype 4 (strain ATCC BAA-334 / TIGR4).